The primary structure comprises 505 residues: Tyrosine-protein kinase Blk (505 aa).

Positions 1 to 37 (MGLVSSKKPDKEKPIKEKDKGQWSPLKVSAQDKDAPP) are disordered. Gly-2 is lipidated: N-myristoyl glycine. Residues 7 to 21 (KKPDKEKPIKEKDKG) show a composition bias toward basic and acidic residues. Positions 58 to 118 (EDKHFVVALY…PSNFVARVES (61 aa)) constitute an SH3 domain. The region spanning 124-220 (WFFRSQGRKE…GLCQRLTLPC (97 aa)) is the SH2 domain. The Protein kinase domain occupies 241–494 (LRLVRKLGSG…FLQSVLEDFY (254 aa)). ATP contacts are provided by residues 247 to 255 (LGSGQFGEV) and Lys-269. Asp-360 serves as the catalytic Proton acceptor. Tyr-389 carries the phosphotyrosine; by autocatalysis modification.

It belongs to the protein kinase superfamily. Tyr protein kinase family. SRC subfamily. In terms of assembly, interacts with CBL (via SH2 domain). Interacts with CD79A and CD79B (via SH2 domain). Post-translationally, phosphorylated on tyrosine residues after antibody-mediated surface engagement of the B-cell antigen receptor (BCR). In terms of processing, ubiquitination of activated BLK by the UBE3A ubiquitin protein ligase leads to its degradation by the ubiquitin-proteasome pathway. Expressed in lymphatic organs, pancreatic islets, Leydig cells, striate ducts of salivary glands and hair follicles.

It localises to the cell membrane. It catalyses the reaction L-tyrosyl-[protein] + ATP = O-phospho-L-tyrosyl-[protein] + ADP + H(+). With respect to regulation, antibody-mediated surface engagement of the B-cell antigen receptor (BCR) which results in the phosphorylation of BLK on tyrosine residues, stimulates the enzymatic activity. Functionally, non-receptor tyrosine kinase involved in B-lymphocyte development, differentiation and signaling. B-cell receptor (BCR) signaling requires a tight regulation of several protein tyrosine kinases and phosphatases, and associated coreceptors. Binding of antigen to the B-cell antigen receptor (BCR) triggers signaling that ultimately leads to B-cell activation. Signaling through BLK plays an important role in transmitting signals through surface immunoglobulins and supports the pro-B to pre-B transition, as well as the signaling for growth arrest and apoptosis downstream of B-cell receptor. Specifically binds and phosphorylates CD79A at 'Tyr-188'and 'Tyr-199', as well as CD79B at 'Tyr-196' and 'Tyr-207'. Also phosphorylates the immunoglobulin G receptors FCGR2A, FCGR2B and FCGR2C. With FYN and LYN, plays an essential role in pre-B-cell receptor (pre-BCR)-mediated NF-kappa-B activation. Also contributes to BTK activation by indirectly stimulating BTK intramolecular autophosphorylation. In pancreatic islets, acts as a modulator of beta-cells function through the up-regulation of PDX1 and NKX6-1 and consequent stimulation of insulin secretion in response to glucose. Phosphorylates CGAS, promoting retention of CGAS in the cytosol. The protein is Tyrosine-protein kinase Blk (BLK) of Homo sapiens (Human).